We begin with the raw amino-acid sequence, 199 residues long: NADH-quinone oxidoreductase subunit B 2 (199 aa).

[4Fe-4S] cluster-binding residues include cysteine 78, cysteine 79, cysteine 143, and cysteine 173.

This sequence belongs to the complex I 20 kDa subunit family. As to quaternary structure, NDH-1 is composed of 14 different subunits. Subunits NuoB, C, D, E, F, and G constitute the peripheral sector of the complex. [4Fe-4S] cluster is required as a cofactor.

Its subcellular location is the cell inner membrane. It carries out the reaction a quinone + NADH + 5 H(+)(in) = a quinol + NAD(+) + 4 H(+)(out). Functionally, NDH-1 shuttles electrons from NADH, via FMN and iron-sulfur (Fe-S) centers, to quinones in the respiratory chain. The immediate electron acceptor for the enzyme in this species is believed to be ubiquinone. Couples the redox reaction to proton translocation (for every two electrons transferred, four hydrogen ions are translocated across the cytoplasmic membrane), and thus conserves the redox energy in a proton gradient. The chain is NADH-quinone oxidoreductase subunit B 2 from Rhodopseudomonas palustris (strain BisB5).